A 530-amino-acid polypeptide reads, in one-letter code: Plexin domain-containing protein 2 (530 aa).

The first 30 residues, 1–30 (MARFRRADLAAAGVMLLCHFLTDRFQFAHG), serve as a signal peptide directing secretion. Residues 31–455 (EPGHHTNDWI…AEKKGGTLHA (425 aa)) lie on the Extracellular side of the membrane. N-linked (GlcNAc...) asparagine glycans are attached at residues asparagine 103 and asparagine 160. In terms of domain architecture, PSI spans 327 to 372 (TCLQFNGCGPCVSSQIGFNCSWCSKLQRCSSGFDRHRQDWVDSGCP). Basic and acidic residues predominate over residues 378 to 387 (KEKMCEKTEP). Residues 378 to 399 (KEKMCEKTEPGETSQTTTTSHT) are disordered. Residues 390 to 399 (TSQTTTTSHT) show a composition bias toward low complexity. A helical transmembrane segment spans residues 456 to 476 (GLIVGILILVLIIAAAILVTV). Residues 477 to 530 (YMYHHPTSAASIFFIERRPSRWPAMKFRRGSGHPAYAEVEPVGEKEGFIVSEQC) are Cytoplasmic-facing. Serine 507 is modified (phosphoserine).

It belongs to the plexin family. As to quaternary structure, interacts with CTTN. Expressed in tumor endothelium and in vessels of some normal tissues, such as the muscle and lung.

It is found in the membrane. May play a role in tumor angiogenesis. This chain is Plexin domain-containing protein 2 (Plxdc2), found in Mus musculus (Mouse).